The sequence spans 263 residues: Hemin import ATP-binding protein HmuV (263 aa).

An ABC transporter domain is found at 2-242; it reads IEARDVSVDI…DLIEKVFDCR (241 aa). ATP is bound at residue 34 to 41; that stretch reads GPNGSGKT.

Belongs to the ABC transporter superfamily. Heme (hemin) importer (TC 3.A.1.14.5) family. The complex is composed of two ATP-binding proteins (HmuV), two transmembrane proteins (HmuU) and a solute-binding protein (HmuT).

The protein resides in the cell inner membrane. Functionally, part of the ABC transporter complex HmuTUV involved in hemin import. Responsible for energy coupling to the transport system. The protein is Hemin import ATP-binding protein HmuV of Mesorhizobium japonicum (strain LMG 29417 / CECT 9101 / MAFF 303099) (Mesorhizobium loti (strain MAFF 303099)).